We begin with the raw amino-acid sequence, 45 residues long: Cytochrome b559 subunit beta (45 aa).

Residues Trp-20–Ala-36 form a helical membrane-spanning segment. His-24 is a binding site for heme.

The protein belongs to the PsbE/PsbF family. As to quaternary structure, heterodimer of an alpha subunit and a beta subunit. PSII is composed of 1 copy each of membrane proteins PsbA, PsbB, PsbC, PsbD, PsbE, PsbF, PsbH, PsbI, PsbJ, PsbK, PsbL, PsbM, PsbT, PsbX, PsbY, PsbZ, Psb30/Ycf12, peripheral proteins PsbO, CyanoQ (PsbQ), PsbU, PsbV and a large number of cofactors. It forms dimeric complexes. Heme b is required as a cofactor.

Its subcellular location is the cellular thylakoid membrane. Its function is as follows. This b-type cytochrome is tightly associated with the reaction center of photosystem II (PSII). PSII is a light-driven water:plastoquinone oxidoreductase that uses light energy to abstract electrons from H(2)O, generating O(2) and a proton gradient subsequently used for ATP formation. It consists of a core antenna complex that captures photons, and an electron transfer chain that converts photonic excitation into a charge separation. This Trichormus variabilis (strain ATCC 29413 / PCC 7937) (Anabaena variabilis) protein is Cytochrome b559 subunit beta.